Consider the following 270-residue polypeptide: ATP synthase subunit a (270 aa).

The next 5 membrane-spanning stretches (helical) occupy residues 37-57 (NVHI…LWVF), 98-118 (IAPL…MDLV), 143-163 (DVNI…YYSI), 217-237 (VVFI…GALP), and 239-259 (AIFH…LTIV).

Belongs to the ATPase A chain family. As to quaternary structure, F-type ATPases have 2 components, CF(1) - the catalytic core - and CF(0) - the membrane proton channel. CF(1) has five subunits: alpha(3), beta(3), gamma(1), delta(1), epsilon(1). CF(0) has three main subunits: a(1), b(2) and c(9-12). The alpha and beta chains form an alternating ring which encloses part of the gamma chain. CF(1) is attached to CF(0) by a central stalk formed by the gamma and epsilon chains, while a peripheral stalk is formed by the delta and b chains.

It is found in the cell inner membrane. Functionally, key component of the proton channel; it plays a direct role in the translocation of protons across the membrane. This Aliivibrio fischeri (strain ATCC 700601 / ES114) (Vibrio fischeri) protein is ATP synthase subunit a.